A 74-amino-acid chain; its full sequence is Translational regulator CsrA (74 aa).

Belongs to the CsrA/RsmA family. In terms of assembly, homodimer; the beta-strands of each monomer intercalate to form a hydrophobic core, while the alpha-helices form wings that extend away from the core.

The protein resides in the cytoplasm. A translational regulator that binds mRNA to regulate translation initiation and/or mRNA stability. Usually binds in the 5'-UTR at or near the Shine-Dalgarno sequence preventing ribosome-binding, thus repressing translation. Its main target seems to be the major flagellin gene, while its function is anatagonized by FliW. The chain is Translational regulator CsrA from Alkaliphilus oremlandii (strain OhILAs) (Clostridium oremlandii (strain OhILAs)).